A 292-amino-acid polypeptide reads, in one-letter code: 5,10-methylenetetrahydrofolate reductase (292 aa).

The active-site Proton donor/acceptor is the Glu-26. Thr-57 is an NADH binding site. 14 residues coordinate FAD: Tyr-58, Ala-60, His-86, Arg-116, Gly-117, Asp-118, Ala-130, Tyr-150, His-154, Ala-157, Asp-163, Asn-166, Arg-169, and Lys-170. Position 118 (Asp-118) interacts with (6S)-5-methyl-5,6,7,8-tetrahydrofolate. Residue Gln-181 coordinates NADH. (6S)-5-methyl-5,6,7,8-tetrahydrofolate contacts are provided by Gln-181, Gln-217, and Arg-277.

The protein belongs to the methylenetetrahydrofolate reductase family. It depends on FAD as a cofactor.

It catalyses the reaction (6S)-5-methyl-5,6,7,8-tetrahydrofolate + NAD(+) = (6R)-5,10-methylene-5,6,7,8-tetrahydrofolate + NADH + H(+). It functions in the pathway one-carbon metabolism; tetrahydrofolate interconversion. The protein operates within amino-acid biosynthesis; L-methionine biosynthesis via de novo pathway. Its function is as follows. Catalyzes the NADH-dependent reduction of 5,10-methylenetetrahydrofolate to 5-methyltetrahydrofolate. Is required to provide the methyl group necessary for methionine synthetase to convert homocysteine to methionine; the methyl group is given by 5-methyltetrahydrofolate. The chain is 5,10-methylenetetrahydrofolate reductase (metF) from Neisseria meningitidis serogroup B (strain ATCC BAA-335 / MC58).